A 189-amino-acid polypeptide reads, in one-letter code: Peptidyl-tRNA hydrolase (189 aa).

Tyrosine 15 serves as a coordination point for tRNA. Histidine 20 serves as the catalytic Proton acceptor. 3 residues coordinate tRNA: phenylalanine 66, asparagine 68, and asparagine 114.

It belongs to the PTH family. As to quaternary structure, monomer.

The protein resides in the cytoplasm. It carries out the reaction an N-acyl-L-alpha-aminoacyl-tRNA + H2O = an N-acyl-L-amino acid + a tRNA + H(+). Functionally, hydrolyzes ribosome-free peptidyl-tRNAs (with 1 or more amino acids incorporated), which drop off the ribosome during protein synthesis, or as a result of ribosome stalling. Its function is as follows. Catalyzes the release of premature peptidyl moieties from peptidyl-tRNA molecules trapped in stalled 50S ribosomal subunits, and thus maintains levels of free tRNAs and 50S ribosomes. The protein is Peptidyl-tRNA hydrolase of Streptococcus gordonii (strain Challis / ATCC 35105 / BCRC 15272 / CH1 / DL1 / V288).